Consider the following 225-residue polypeptide: AA9 family lytic polysaccharide monooxygenase A (225 aa).

Residues 1–17 (MLTTTFALLTAALGVSA) form the signal peptide. Positions 18 and 85 each coordinate Cu(2+). 2 disulfides stabilise this stretch: Cys55–Cys173 and Cys143–Cys225. Residues His159 and Gln168 each coordinate O2. Tyr170 serves as a coordination point for Cu(2+).

This sequence belongs to the polysaccharide monooxygenase AA9 family. Cu(2+) serves as cofactor.

It is found in the secreted. It catalyses the reaction [(1-&gt;4)-beta-D-glucosyl]n+m + reduced acceptor + O2 = 4-dehydro-beta-D-glucosyl-[(1-&gt;4)-beta-D-glucosyl]n-1 + [(1-&gt;4)-beta-D-glucosyl]m + acceptor + H2O.. Is able to utilize various natural phenolic compounds as reducing agents. Most of these reducing agents are present in plants, either free or as lignin building blocks, such as sinapic acid, or as flavonoids such as catechin and dopamine. Phenolic compounds with 1,2-benzenediol and 1,2,3-benzenetriol moieties yield the highest release of oxidized and non-oxidized glucooligosaccharides from cellulose compared to monophenols or sulfur-containing compounds. In terms of biological role, lytic polysaccharide monooxygenase (LPMO) that depolymerizes crystalline and amorphous polysaccharides via the oxidation of scissile alpha- or beta-(1-4)-glycosidic bonds, yielding C1 or C4 oxidation products. Catalysis by LPMOs requires the reduction of the active-site copper from Cu(II) to Cu(I) by a reducing agent and H(2)O(2) or O(2) as a cosubstrate. Shows oxidative cleavage of xylan in addition to cellulose. Shows a strong synergistic effect with endoglucanase I (EGI) with a 16-fold higher release of detected oligosaccharides. The chain is AA9 family lytic polysaccharide monooxygenase A from Thermothelomyces thermophilus (strain ATCC 42464 / BCRC 31852 / DSM 1799) (Sporotrichum thermophile).